Reading from the N-terminus, the 173-residue chain is RNA pyrophosphohydrolase (173 aa).

The Nudix hydrolase domain occupies 6-149; it reads GFRANVGIIL…KRSVYRRALQ (144 aa). Residues 38–59 carry the Nudix box motif; that stretch reads GGIDRGETPMDAMYRELWEEVG.

The protein belongs to the Nudix hydrolase family. RppH subfamily. A divalent metal cation serves as cofactor.

Accelerates the degradation of transcripts by removing pyrophosphate from the 5'-end of triphosphorylated RNA, leading to a more labile monophosphorylated state that can stimulate subsequent ribonuclease cleavage. The protein is RNA pyrophosphohydrolase of Psychrobacter cryohalolentis (strain ATCC BAA-1226 / DSM 17306 / VKM B-2378 / K5).